Here is a 686-residue protein sequence, read N- to C-terminus: Cyclic nucleotide-gated channel alpha-1 (686 aa).

The Cytoplasmic segment spans residues 1–165 (MKNNIINTQQ…PSGNTYYNWL (165 aa)). 2 disordered regions span residues 31–75 (ENGA…PSQR) and 87–149 (NVNN…EEKK). Acidic residues predominate over residues 39 to 53 (SEDDDSASTSEESEN). Residues 110-124 (SKSDDKNENKNDPEK) show a composition bias toward basic and acidic residues. The span at 125 to 134 (KKKKKDKEKK) shows a compositional bias: basic residues. A compositionally biased stretch (basic and acidic residues) spans 135–149 (KKEEKSKDKKEEEKK). The helical transmembrane segment at 166 to 187 (FCITLPVMYNWTMVIARACFDE) threads the bilayer. The Extracellular portion of the chain corresponds to 188 to 197 (LQSDYLEYWL). The chain crosses the membrane as a helical span at residues 198-218 (ILDYVSDIVYLIDMFVRTRTG). Residues 219–243 (YLEQGLLVKEELKLINKYKSNLQFK) are Cytoplasmic-facing. The chain crosses the membrane as a helical span at residues 244–262 (LDVLSLIPTDLLYFKLGWN). The Extracellular portion of the chain corresponds to 263–267 (YPEIR). The helical transmembrane segment at 268-286 (LNRLLRFSRMFEFFQRTET) threads the bilayer. The Cytoplasmic portion of the chain corresponds to 287-293 (RTNYPNI). Residues 291-399 (PNIFRISNLV…GNIGSMISNM (109 aa)) form an ion conduction pathway region. A helical transmembrane segment spans residues 294 to 317 (FRISNLVMYIVIIIHWNACVFYSI). The Extracellular segment spans residues 318-340 (SKAIGFGNDTWVYPDINDPEFGR). Residue N325 is glycosylated (N-linked (GlcNAc...) asparagine). The next 2 helical transmembrane spans lie at 341 to 375 (LARK…VFVV) and 376 to 400 (VDFL…SNMN). Residues 358–361 (TIGE) are selectivity filter. Residues 401–477 (AARAEFQARI…DTLKKVRIFA (77 aa)) are C-linker. Topologically, residues 401 to 686 (AARAEFQARI…GAESGPIDST (286 aa)) are cytoplasmic. The segment at 481–601 (AGLLVELVLK…EEKGKQILMK (121 aa)) is cyclic nucleotide-binding domain. Positions 541, 544, 557, and 558 each coordinate 3',5'-cyclic GMP. 3',5'-cyclic AMP-binding residues include R557 and T558. Positions 619–673 (LEEKVTRMEGSVDLLQTRFARILAEYESMQQKLKQRLTKVEKFLKPLIDTEFSSI) form a coiled coil.

This sequence belongs to the cyclic nucleotide-gated cation channel (TC 1.A.1.5) family. CNGA1 subfamily. As to quaternary structure, forms heterotetrameric channels composed of CNGA1 and CNGB1 subunits with 3:1 stoichiometry. May also form cyclic nucleotide-activated homotetrameric channels, that are efficiently activated by saturating cGMP, but poorly activated by saturating cAMP compared to the heterotetramer with CNGB1. The channel binds Ca(2+)-bound CALM1 via CaM1 and CaM2 regions of the CNGB1 subunit; this interaction modulates the affinity of the channel for cNMPs in response to intracellular Ca(2+) levels. In terms of tissue distribution, rod cells in the retina.

It localises to the cell membrane. It carries out the reaction Ca(2+)(in) = Ca(2+)(out). It catalyses the reaction Na(+)(in) = Na(+)(out). The catalysed reaction is K(+)(in) = K(+)(out). The enzyme catalyses NH4(+)(in) = NH4(+)(out). It carries out the reaction Rb(+)(in) = Rb(+)(out). It catalyses the reaction Li(+)(in) = Li(+)(out). The catalysed reaction is Cs(+)(in) = Cs(+)(out). With respect to regulation, channel opening is activated by cGMP and at a much lesser extent by cAMP. Ca(2+) binding concominantly blocks monovalent cation currents. Inhibited by L-cis-diltiazem. In terms of biological role, pore-forming subunit of the rod cyclic nucleotide-gated channel. Mediates rod photoresponses at dim light converting transient changes in intracellular cGMP levels into electrical signals. In the dark, cGMP levels are high and keep the channel open enabling a steady inward current carried by Na(+) and Ca(2+) ions that leads to membrane depolarization and neurotransmitter release from synaptic terminals. Upon photon absorption cGMP levels decline leading to channel closure and membrane hyperpolarization that ultimately slows neurotransmitter release and signals the presence of light, the end point of the phototransduction cascade. Conducts cGMP- and cAMP-gated ion currents, with permeability for monovalent and divalent cations. The selectivity for Ca(2+) over Na(+) increases with cGMP concentrations, whereas the selectivity among monovalent ions is independent of the cGMP levels. The sequence is that of Cyclic nucleotide-gated channel alpha-1 from Homo sapiens (Human).